Reading from the N-terminus, the 284-residue chain is 4-hydroxybenzoate octaprenyltransferase (284 aa).

Transmembrane regions (helical) follow at residues 16-36 (PIGI…ASDG), 40-60 (WTLV…GCAV), 91-111 (LLVA…LNTL), 132-152 (FFAI…PMGF), 157-177 (NTVP…SVAY), 207-227 (AIIM…GWQF), 231-251 (IWFV…YTLI), and 259-279 (CFAA…GVAL).

This sequence belongs to the UbiA prenyltransferase family. Requires Mg(2+) as cofactor.

It is found in the cell inner membrane. The enzyme catalyses all-trans-octaprenyl diphosphate + 4-hydroxybenzoate = 4-hydroxy-3-(all-trans-octaprenyl)benzoate + diphosphate. It participates in cofactor biosynthesis; ubiquinone biosynthesis. Catalyzes the prenylation of para-hydroxybenzoate (PHB) with an all-trans polyprenyl group. Mediates the second step in the final reaction sequence of ubiquinone-8 (UQ-8) biosynthesis, which is the condensation of the polyisoprenoid side chain with PHB, generating the first membrane-bound Q intermediate 3-octaprenyl-4-hydroxybenzoate. In Janthinobacterium sp. (strain Marseille) (Minibacterium massiliensis), this protein is 4-hydroxybenzoate octaprenyltransferase.